The sequence spans 396 residues: Enoyl-[acyl-carrier-protein] reductase [NADH] (396 aa).

NAD(+) is bound by residues 48 to 53, 74 to 75, 111 to 112, and 139 to 140; these read GASTGY, FE, DA, and LA. Tyrosine 225 lines the substrate pocket. Tyrosine 235 functions as the Proton donor in the catalytic mechanism. NAD(+)-binding positions include lysine 244 and 273-275; that span reads VVT.

This sequence belongs to the TER reductase family. Monomer.

It carries out the reaction a 2,3-saturated acyl-[ACP] + NAD(+) = a (2E)-enoyl-[ACP] + NADH + H(+). It participates in lipid metabolism; fatty acid biosynthesis. In terms of biological role, involved in the final reduction of the elongation cycle of fatty acid synthesis (FAS II). Catalyzes the reduction of a carbon-carbon double bond in an enoyl moiety that is covalently linked to an acyl carrier protein (ACP). The chain is Enoyl-[acyl-carrier-protein] reductase [NADH] from Teredinibacter turnerae (strain ATCC 39867 / T7901).